The following is a 131-amino-acid chain: Ribonuclease P protein component (131 aa).

The protein belongs to the RnpA family. As to quaternary structure, consists of a catalytic RNA component (M1 or rnpB) and a protein subunit.

It carries out the reaction Endonucleolytic cleavage of RNA, removing 5'-extranucleotides from tRNA precursor.. Its function is as follows. RNaseP catalyzes the removal of the 5'-leader sequence from pre-tRNA to produce the mature 5'-terminus. It can also cleave other RNA substrates such as 4.5S RNA. The protein component plays an auxiliary but essential role in vivo by binding to the 5'-leader sequence and broadening the substrate specificity of the ribozyme. The polypeptide is Ribonuclease P protein component (Acinetobacter baylyi (strain ATCC 33305 / BD413 / ADP1)).